Consider the following 468-residue polypeptide: ATP synthase subunit beta (468 aa).

Residue 148–155 (GGAGVGKT) coordinates ATP.

Belongs to the ATPase alpha/beta chains family. In terms of assembly, F-type ATPases have 2 components, CF(1) - the catalytic core - and CF(0) - the membrane proton channel. CF(1) has five subunits: alpha(3), beta(3), gamma(1), delta(1), epsilon(1). CF(0) has three main subunits: a(1), b(2) and c(9-12). The alpha and beta chains form an alternating ring which encloses part of the gamma chain. CF(1) is attached to CF(0) by a central stalk formed by the gamma and epsilon chains, while a peripheral stalk is formed by the delta and b chains.

It localises to the cell inner membrane. It carries out the reaction ATP + H2O + 4 H(+)(in) = ADP + phosphate + 5 H(+)(out). Produces ATP from ADP in the presence of a proton gradient across the membrane. The catalytic sites are hosted primarily by the beta subunits. This is ATP synthase subunit beta from Xanthomonas campestris pv. campestris (strain 8004).